Reading from the N-terminus, the 860-residue chain is Leucine--tRNA ligase (860 aa).

The short motif at 42 to 52 (PYPSGRLHMGH) is the 'HIGH' region element. The 'KMSKS' region motif lies at 619 to 623 (KMSKS). Lys622 is an ATP binding site.

This sequence belongs to the class-I aminoacyl-tRNA synthetase family.

The protein localises to the cytoplasm. The enzyme catalyses tRNA(Leu) + L-leucine + ATP = L-leucyl-tRNA(Leu) + AMP + diphosphate. This chain is Leucine--tRNA ligase, found in Escherichia coli O17:K52:H18 (strain UMN026 / ExPEC).